Reading from the N-terminus, the 100-residue chain is Urease subunit gamma (100 aa).

The protein belongs to the urease gamma subunit family. Heterotrimer of UreA (gamma), UreB (beta) and UreC (alpha) subunits. Three heterotrimers associate to form the active enzyme.

It localises to the cytoplasm. It carries out the reaction urea + 2 H2O + H(+) = hydrogencarbonate + 2 NH4(+). Its pathway is nitrogen metabolism; urea degradation; CO(2) and NH(3) from urea (urease route): step 1/1. This Teredinibacter turnerae (strain ATCC 39867 / T7901) protein is Urease subunit gamma.